The following is a 258-amino-acid chain: Isoprenyl transferase 2 (258 aa).

Residue Asp-35 is part of the active site. Asp-35 is a Mg(2+) binding site. Substrate is bound by residues Gly-36–Arg-39, Trp-40, Arg-50, and Ser-81–Asp-83. The active-site Proton acceptor is Asn-84. Residues Arg-87, Arg-207, and Arg-213–Ser-215 contribute to the substrate site. Glu-226 is a binding site for Mg(2+).

This sequence belongs to the UPP synthase family. In terms of assembly, homodimer. It depends on Mg(2+) as a cofactor.

In terms of biological role, catalyzes the condensation of isopentenyl diphosphate (IPP) with allylic pyrophosphates generating different type of terpenoids. The protein is Isoprenyl transferase 2 of Streptomyces coelicolor (strain ATCC BAA-471 / A3(2) / M145).